Consider the following 315-residue polypeptide: Calumenin (315 aa).

Positions Met-1–Ser-19 are cleaved as a signal peptide. Tyr-47 bears the Phosphotyrosine mark. Thr-65 bears the Phosphothreonine mark. EF-hand domains lie at Glu-68 to Arg-103, Trp-104 to Asp-139, Gln-151 to Asp-186, Met-188 to Asn-223, Trp-229 to Asp-264, and His-265 to Ser-300. Ser-69 bears the Phosphoserine mark. Ca(2+) contacts are provided by Asp-81, Asp-83, Asp-85, Glu-92, Asp-117, Asn-119, Asp-121, and Glu-128. The N-linked (GlcNAc...) asparagine glycan is linked to Asn-131. A Ca(2+)-binding site is contributed by Asp-164. Position 165 is an N6-acetyllysine (Lys-165). Asp-166, Asp-168, Glu-175, Asp-201, Asn-203, Asp-205, Glu-212, Asp-242, Asn-244, Asp-246, Arg-248, and Glu-253 together coordinate Ca(2+). A Phosphothreonine modification is found at Thr-254. Ser-261 and Ser-277 each carry phosphoserine. Ca(2+)-binding residues include Asp-278, Asn-280, Asp-282, Lys-284, and Glu-289. A Prevents secretion from ER motif is present at residues His-312 to Phe-315.

It belongs to the CREC family. Interacts with GGCX.

The protein resides in the endoplasmic reticulum membrane. It localises to the golgi apparatus. Its subcellular location is the secreted. It is found in the melanosome. The protein localises to the sarcoplasmic reticulum lumen. Involved in regulation of vitamin K-dependent carboxylation of multiple N-terminal glutamate residues. Seems to inhibit gamma-carboxylase GGCX. Binds 7 calcium ions with a low affinity. In Mesocricetus auratus (Golden hamster), this protein is Calumenin (CALU).